A 447-amino-acid polypeptide reads, in one-letter code: MASQEEFYRTQIFGTVFEITNRYADLNPVGMGAFGLVCSAVDTYTQQPVAIKKIMKPFSTAVLAKRTYRELKLLKHLRHENLICLEDIFLSPLEDIYFVTELQGTDLHRLLQTRPLEKQFLQYFLYQILRGLKYVHSAGVIHRDLKPSNILINENCDLKICDFGLARIQDPQMTGYVSTRYYRAPEIMLTWQKYNVEVDIWSAGCIFAEMIEGKPLFPGKDHVHQFSIITDLLGSPPKDVIDTICSENTLKFVTSLPHRDPVPFTERFKNLKPDAVDLLEKMLVFDPKKRITAGDALTHPYLAPYHDPTDEPVADAKFDWNFNDADLPVDTWRVMMYSEILDFHQVPDSQINPNDTFDDQVAAATAAAEAARQQQQQKQQQQKQQQQRHQGVEHGAQHVQLQHGAKQLSADPLVGDSNGGIPLNVSAANETLNNFANQAAQYATDFE.

One can recognise a Protein kinase domain in the interval 23-302; that stretch reads YADLNPVGMG…AGDALTHPYL (280 aa). Residues 29-37 and K52 contribute to the ATP site; that span reads VGMGAFGLV. Catalysis depends on D144, which acts as the Proton acceptor. T174 carries the post-translational modification Phosphothreonine. The TXY motif lies at 174–176; the sequence is TGY. At Y176 the chain carries Phosphotyrosine. The segment covering 373 to 389 has biased composition (low complexity); that stretch reads QQQQQKQQQQKQQQQRH. Positions 373 to 404 are disordered; it reads QQQQQKQQQQKQQQQRHQGVEHGAQHVQLQHG.

This sequence belongs to the protein kinase superfamily. Ser/Thr protein kinase family. MAP kinase subfamily. HOG1 sub-subfamily. Mg(2+) serves as cofactor. Post-translationally, dually phosphorylated on Thr-174 and Tyr-176, which activates the enzyme.

Its subcellular location is the cytoplasm. The protein resides in the nucleus. The enzyme catalyses L-seryl-[protein] + ATP = O-phospho-L-seryl-[protein] + ADP + H(+). The catalysed reaction is L-threonyl-[protein] + ATP = O-phospho-L-threonyl-[protein] + ADP + H(+). Its activity is regulated as follows. Activated by tyrosine and threonine phosphorylation. Functionally, proline-directed serine/threonine-protein kinase involved in a signal transduction pathway that is activated by changes in the osmolarity of the extracellular environment. Controls osmotic regulation of transcription of target genes. In Eremothecium gossypii (strain ATCC 10895 / CBS 109.51 / FGSC 9923 / NRRL Y-1056) (Yeast), this protein is Mitogen-activated protein kinase HOG1 (HOG1).